The sequence spans 207 residues: Ras-related protein Rab-8B (207 aa).

The GTP site is built by serine 17, glycine 18, valine 19, glycine 20, lysine 21, threonine 22, cysteine 23, threonine 35, serine 39, and threonine 40. Threonine 22 contacts Mg(2+). 2 short sequence motifs (switch) span residues 31–45 and 63–80; these read DAFN…GIDF and DTAG…YYRG. Mg(2+) is bound by residues threonine 40 and aspartate 63. Glycine 66 contacts GTP. At threonine 72 the chain carries Phosphothreonine; by LRRK2. Positions 121, 122, 124, 152, and 153 each coordinate GTP. Phosphoserine is present on residues serine 180 and serine 183. At cysteine 204 the chain carries Cysteine methyl ester. Residue cysteine 204 is the site of S-geranylgeranyl cysteine attachment. Positions 205–207 are cleaved as a propeptide — removed in mature form; the sequence is SLL.

The protein belongs to the small GTPase superfamily. Rab family. In terms of assembly, associated with actin, delta-catenin and alpha and beta tubulins. Interacts with OTOF. Interacts with PEX5R. Interacts with RAB3IP. Interacts with VIM. Interacts with CDH1. Interacts with MICALL2. Interacts with GDI1, GDI2, CHML and CHM; phosphorylation at Thr-72 disrupts these interactions. Interacts with MICAL1. Mg(2+) serves as cofactor. Post-translationally, phosphorylation of Thr-72 in the switch II region by LRRK2 prevents the association of RAB regulatory proteins, including CHM, CHML and RAB GDP dissociation inhibitors GDI1 and GDI2.

The protein resides in the cell membrane. The protein localises to the cytoplasmic vesicle. It localises to the phagosome membrane. Its subcellular location is the endosome membrane. The enzyme catalyses GTP + H2O = GDP + phosphate + H(+). Regulated by guanine nucleotide exchange factors (GEFs) including RAB3IP/RABIN8 which promotes the exchange of bound GDP for free GTP. Regulated by GTPase activating proteins (GAPs) which increase the GTP hydrolysis activity. Inhibited by GDP dissociation inhibitors (GDIs). In terms of biological role, the small GTPases Rab are key regulators of intracellular membrane trafficking, from the formation of transport vesicles to their fusion with membranes. Rabs cycle between an inactive GDP-bound form and an active GTP-bound form that is able to recruit to membranes different sets of downstream effectors directly responsible for vesicle formation, movement, tethering and fusion. RAB8B may be involved in polarized vesicular trafficking and neurotransmitter release. May participate in cell junction dynamics in Sertoli cells. May also participate in the export of a subset of neosynthesized proteins through a Rab8-Rab10-Rab11-dependent endososomal export route. The sequence is that of Ras-related protein Rab-8B from Mus musculus (Mouse).